The following is a 209-amino-acid chain: Large ribosomal subunit protein bL25 (209 aa).

The protein belongs to the bacterial ribosomal protein bL25 family. CTC subfamily. In terms of assembly, part of the 50S ribosomal subunit; part of the 5S rRNA/L5/L18/L25 subcomplex. Contacts the 5S rRNA. Binds to the 5S rRNA independently of L5 and L18.

In terms of biological role, this is one of the proteins that binds to the 5S RNA in the ribosome where it forms part of the central protuberance. The chain is Large ribosomal subunit protein bL25 from Xanthomonas campestris pv. campestris (strain 8004).